The primary structure comprises 248 residues: MAGHSKWANIKHRKERQDAKRGKIFTKWIRELTVAARQGGGDPNSNPRLRLALDKALGANMSRDIIDRAIARGTGAAGSDDVVELTYEGYGPNGVAVMVECMTDNRNRTAAAVRHAFSKCGGNLGTDGSVAYLFERKGQITFAEGVDEDALMEAAMEADADDVVSNEDGSIDVFTSFAGFYGVRNALEAAGFTAADAEIVMLPTTSAELDLEGAEKVLKLIDMLEDLDDVQNVYSNADIPESVAEQLG.

The protein belongs to the TACO1 family.

Its subcellular location is the cytoplasm. The polypeptide is Probable transcriptional regulatory protein PFL_4766 (Pseudomonas fluorescens (strain ATCC BAA-477 / NRRL B-23932 / Pf-5)).